Reading from the N-terminus, the 240-residue chain is 7-cyano-7-deazaguanine synthase (240 aa).

9–19 lines the ATP pocket; it reads FSGGLDSTACL. Positions 195, 210, 213, and 216 each coordinate Zn(2+).

Belongs to the QueC family. The cofactor is Zn(2+).

It catalyses the reaction 7-carboxy-7-deazaguanine + NH4(+) + ATP = 7-cyano-7-deazaguanine + ADP + phosphate + H2O + H(+). It functions in the pathway purine metabolism; 7-cyano-7-deazaguanine biosynthesis. In terms of biological role, catalyzes the ATP-dependent conversion of 7-carboxy-7-deazaguanine (CDG) to 7-cyano-7-deazaguanine (preQ(0)). The chain is 7-cyano-7-deazaguanine synthase from Pyrococcus furiosus (strain ATCC 43587 / DSM 3638 / JCM 8422 / Vc1).